A 383-amino-acid chain; its full sequence is Acetylornithine deacetylase (383 aa).

H80 contacts Zn(2+). The active site involves D82. D112 contributes to the Zn(2+) binding site. The active site involves E144. The Zn(2+) site is built by E145, E169, and H355.

It belongs to the peptidase M20A family. ArgE subfamily. As to quaternary structure, homodimer. Requires Zn(2+) as cofactor. It depends on Co(2+) as a cofactor. Glutathione is required as a cofactor.

The protein localises to the cytoplasm. It carries out the reaction N(2)-acetyl-L-ornithine + H2O = L-ornithine + acetate. Its pathway is amino-acid biosynthesis; L-arginine biosynthesis; L-ornithine from N(2)-acetyl-L-ornithine (linear): step 1/1. Functionally, catalyzes the hydrolysis of the amide bond of N(2)-acetylated L-amino acids. Cleaves the acetyl group from N-acetyl-L-ornithine to form L-ornithine, an intermediate in L-arginine biosynthesis pathway, and a branchpoint in the synthesis of polyamines. The protein is Acetylornithine deacetylase of Klebsiella pneumoniae (strain 342).